A 334-amino-acid chain; its full sequence is Protein-glutamate methylesterase FrzG (334 aa).

The CheB-type methylesterase domain maps to 147–334; sequence PYPLVAIAAS…AALMQWVDVC (188 aa). Residues serine 156, histidine 183, and aspartate 276 contribute to the active site.

It catalyses the reaction [protein]-L-glutamate 5-O-methyl ester + H2O = L-glutamyl-[protein] + methanol + H(+). Functionally, probable methylesterase. Required for the normal aggregation of M.xanthus cells during fruiting body formation. It is also a component of a sensory transduction pathway that controls the frequency at which cells reverse their gliding direction. It may remove the methyl group from the gamma-glutamyl methyl ester residues in FrzCD. This is Protein-glutamate methylesterase FrzG (frzG) from Myxococcus xanthus.